A 298-amino-acid polypeptide reads, in one-letter code: Acetylglutamate kinase (298 aa).

Substrate is bound by residues 68-69 (GG), Arg90, and Asn195.

It belongs to the acetylglutamate kinase family. ArgB subfamily.

It localises to the cytoplasm. It carries out the reaction N-acetyl-L-glutamate + ATP = N-acetyl-L-glutamyl 5-phosphate + ADP. Its pathway is amino-acid biosynthesis; L-arginine biosynthesis; N(2)-acetyl-L-ornithine from L-glutamate: step 2/4. In terms of biological role, catalyzes the ATP-dependent phosphorylation of N-acetyl-L-glutamate. The chain is Acetylglutamate kinase from Hydrogenovibrio crunogenus (strain DSM 25203 / XCL-2) (Thiomicrospira crunogena).